Consider the following 309-residue polypeptide: Taste receptor type 2 member 113 (309 aa).

Residues 1-10 (MVAVLQSTLP) lie on the Extracellular side of the membrane. Residues 11–31 (IIFSMEFIMGTLGNGFIFLIV) form a helical membrane-spanning segment. Residues 32-55 (CIDWVQRRKISLVDQIRTALAISR) are Cytoplasmic-facing. A helical transmembrane segment spans residues 56 to 76 (IALIWLIFLDWWVSVHYPALH). Topologically, residues 77–80 (ETGK) are extracellular. The chain crosses the membrane as a helical span at residues 81–101 (MLSTYLISWTVINHCNFWLTA). Residues 102–127 (NLSILYFLKIANFSNIIFLYLKFRSK) lie on the Cytoplasmic side of the membrane. A helical transmembrane segment spans residues 128-148 (NVVLVTLLVSLFFLFLNTVII). Residues 149-185 (KIFSDVCFDSVQRNVSQIFIMYNHEQICKFLSFTNPM) lie on the Extracellular side of the membrane. N-linked (GlcNAc...) asparagine glycosylation is present at asparagine 162. A helical membrane pass occupies residues 186 to 206 (FTFIPFVMSTVMFSLLIFSLW). At 207 to 229 (RHLKNMQHTAKGCRDISTTVHIR) the chain is on the cytoplasmic side. The helical transmembrane segment at 230–250 (ALQTIIVSVVLYTIFFLSFFV) threads the bilayer. Residues 251–262 (KVWSFVSPERYL) are Extracellular-facing. A helical membrane pass occupies residues 263–283 (IFLFVWALGNAVFSAHPFVMI). Over 284 to 309 (LVNRRLRLASLSLIFWLWYRFKNIEV) the chain is Cytoplasmic.

It belongs to the G-protein coupled receptor T2R family.

The protein localises to the membrane. Putative taste receptor which may play a role in the perception of bitterness. This Mus musculus (Mouse) protein is Taste receptor type 2 member 113.